The sequence spans 800 residues: Nucleolar complex protein 3 homolog (800 aa).

2 stretches are compositionally biased toward basic residues: residues 1 to 19 (MGPASKRNKKKRPSFRKLL) and 42 to 53 (KKQRKEQRKLHK). Disordered stretches follow at residues 1-91 (MGPA…TDMM) and 167-197 (KPVLPQAEEEEEEPNQEVYLQKEEEPESAPL). Over residues 65–74 (PLERYKKRPE) the composition is skewed to basic and acidic residues. The stretch at 449-490 (SFKEKRKNLSRMQRKWKKAEEKLQKELLEAEATESKEKKIKL) forms a coiled coil. The disordered stretch occupies residues 780 to 800 (LQEEPEQMSLDFTSPHTQQEP). Residues 789-800 (LDFTSPHTQQEP) are compositionally biased toward polar residues.

It belongs to the CBF/MAK21 family.

Its subcellular location is the nucleus. The protein localises to the nucleolus. The polypeptide is Nucleolar complex protein 3 homolog (noc3l) (Danio rerio (Zebrafish)).